The sequence spans 447 residues: UDP-N-acetylmuramoylalanine--D-glutamate ligase (447 aa).

112-118 (GTNGKST) provides a ligand contact to ATP.

The protein belongs to the MurCDEF family.

Its subcellular location is the cytoplasm. The enzyme catalyses UDP-N-acetyl-alpha-D-muramoyl-L-alanine + D-glutamate + ATP = UDP-N-acetyl-alpha-D-muramoyl-L-alanyl-D-glutamate + ADP + phosphate + H(+). It functions in the pathway cell wall biogenesis; peptidoglycan biosynthesis. In terms of biological role, cell wall formation. Catalyzes the addition of glutamate to the nucleotide precursor UDP-N-acetylmuramoyl-L-alanine (UMA). In Legionella pneumophila subsp. pneumophila (strain Philadelphia 1 / ATCC 33152 / DSM 7513), this protein is UDP-N-acetylmuramoylalanine--D-glutamate ligase.